An 81-amino-acid chain; its full sequence is Putative sulfur carrier protein VNG_5061C/VNG_5236C/VNG_6059C/VNG_6467C (81 aa).

Cysteine 18 serves as the catalytic Cysteine persulfide intermediate.

This sequence belongs to the sulfur carrier protein TusA family.

This Halobacterium salinarum (strain ATCC 700922 / JCM 11081 / NRC-1) (Halobacterium halobium) protein is Putative sulfur carrier protein VNG_5061C/VNG_5236C/VNG_6059C/VNG_6467C.